The chain runs to 120 residues: MIMPQTRLVVADNTGAKEIMCFRILGKKRVAQVGDIIVASVKEAVPRSNIKKGDVVYAVVIRTKRTIKRKDGSCVRFDDNAAVIIDKEGNPKGTRVFGPVARELRDKNFMKIISLATEVI.

The protein belongs to the universal ribosomal protein uL14 family. As to quaternary structure, part of the 50S ribosomal subunit. Forms a cluster with proteins L3 and L19. In the 70S ribosome, L14 and L19 interact and together make contacts with the 16S rRNA in bridges B5 and B8.

Binds to 23S rRNA. Forms part of two intersubunit bridges in the 70S ribosome. The polypeptide is Large ribosomal subunit protein uL14 (Dictyoglomus thermophilum (strain ATCC 35947 / DSM 3960 / H-6-12)).